The following is a 263-amino-acid chain: MNTFKTYADRAARHPNGCAKALFELMERKQTNLSIAADVTTKKELLHIADACGPYICILKTHIDIIDDFDEDLVAQLCELAKKHDFLLFEDRKFADIGNTVKHQYGKGVYKIASWAHITNAHTVPGEGIITGLREVGLPLGRGLLLLAEMSSKGALTKGSYTTESVEMARRNQDFVFGFIAQHKMNEKDDEDFVVMAPGVGLDVKGDGLGQQYRTPYQVIVESGCDVIIVGRGIYGNPDQIEFQAKRYKEAGWNAYLERVQKH.

Residues Asp-38, Lys-60–His-62, Asp-91–Thr-100, Tyr-213, and Arg-232 contribute to the substrate site. Lys-93 functions as the Proton donor in the catalytic mechanism.

Belongs to the OMP decarboxylase family.

The enzyme catalyses orotidine 5'-phosphate + H(+) = UMP + CO2. It participates in pyrimidine metabolism; UMP biosynthesis via de novo pathway; UMP from orotate: step 2/2. The polypeptide is Orotidine 5'-phosphate decarboxylase (PYR4) (Rhizomucor pusillus).